A 184-amino-acid polypeptide reads, in one-letter code: Large ribosomal subunit protein uL15 (184 aa).

Positions 1 to 55 (MDLSSLSPAKGSVKNKKRVGRGQGSGNGTTAGKGNKGQQSRSGYKRPVSEGGQMP) are disordered. Residues 21 to 35 (RGQGSGNGTTAGKGN) show a composition bias toward gly residues.

It belongs to the universal ribosomal protein uL15 family. In terms of assembly, part of the 50S ribosomal subunit.

Functionally, binds to the 23S rRNA. This is Large ribosomal subunit protein uL15 from Prosthecochloris aestuarii (strain DSM 271 / SK 413).